The chain runs to 189 residues: Probable nicotinate-nucleotide adenylyltransferase (189 aa).

The protein belongs to the NadD family.

It catalyses the reaction nicotinate beta-D-ribonucleotide + ATP + H(+) = deamido-NAD(+) + diphosphate. The protein operates within cofactor biosynthesis; NAD(+) biosynthesis; deamido-NAD(+) from nicotinate D-ribonucleotide: step 1/1. In terms of biological role, catalyzes the reversible adenylation of nicotinate mononucleotide (NaMN) to nicotinic acid adenine dinucleotide (NaAD). In Staphylococcus aureus (strain USA300 / TCH1516), this protein is Probable nicotinate-nucleotide adenylyltransferase.